We begin with the raw amino-acid sequence, 89 residues long: UPF0298 protein GTNG_0961 (89 aa).

It belongs to the UPF0298 family.

It localises to the cytoplasm. The chain is UPF0298 protein GTNG_0961 from Geobacillus thermodenitrificans (strain NG80-2).